A 397-amino-acid chain; its full sequence is Acetate kinase (397 aa).

Residue asparagine 8 participates in Mg(2+) binding. Lysine 15 serves as a coordination point for ATP. Arginine 89 contacts substrate. The Proton donor/acceptor role is filled by aspartate 146. ATP is bound by residues 206-210 (HVGNG), 283-285 (DMR), and 331-335 (GMGEN). Glutamate 383 contributes to the Mg(2+) binding site.

Belongs to the acetokinase family. Homodimer. Mg(2+) serves as cofactor. The cofactor is Mn(2+).

It is found in the cytoplasm. The enzyme catalyses acetate + ATP = acetyl phosphate + ADP. It participates in metabolic intermediate biosynthesis; acetyl-CoA biosynthesis; acetyl-CoA from acetate: step 1/2. Catalyzes the formation of acetyl phosphate from acetate and ATP. Can also catalyze the reverse reaction. In Streptococcus agalactiae serotype Ia (strain ATCC 27591 / A909 / CDC SS700), this protein is Acetate kinase.